The primary structure comprises 210 residues: Ion-translocating oxidoreductase complex subunit G (210 aa).

Residues serine 9–leucine 29 form a helical membrane-spanning segment. The residue at position 176 (threonine 176) is an FMN phosphoryl threonine.

It belongs to the RnfG family. As to quaternary structure, the complex is composed of six subunits: RnfA, RnfB, RnfC, RnfD, RnfE and RnfG. It depends on FMN as a cofactor.

It is found in the cell inner membrane. Its function is as follows. Part of a membrane-bound complex that couples electron transfer with translocation of ions across the membrane. In Aliivibrio fischeri (strain MJ11) (Vibrio fischeri), this protein is Ion-translocating oxidoreductase complex subunit G.